The sequence spans 648 residues: Biosynthetic arginine decarboxylase (648 aa).

Lys-109 is subject to N6-(pyridoxal phosphate)lysine. Residue 291 to 301 coordinates substrate; sequence IDVGGGLGIDF.

The protein belongs to the Orn/Lys/Arg decarboxylase class-II family. SpeA subfamily. Mg(2+) serves as cofactor. Pyridoxal 5'-phosphate is required as a cofactor.

The enzyme catalyses L-arginine + H(+) = agmatine + CO2. It participates in amine and polyamine biosynthesis; agmatine biosynthesis; agmatine from L-arginine: step 1/1. Catalyzes the biosynthesis of agmatine from arginine. The chain is Biosynthetic arginine decarboxylase from Prochlorococcus marinus (strain MIT 9215).